The chain runs to 1303 residues: Alpha,alpha-trehalose-phosphate synthase [UDP-forming] 2 (1303 aa).

Disordered stretches follow at residues 1 to 48 (MTVV…NNTT) and 205 to 251 (LQRR…FRGK). A compositionally biased stretch (low complexity) spans 212-221 (SSRGGSLRGS).

In the N-terminal section; belongs to the glycosyltransferase 20 family. This sequence in the C-terminal section; belongs to the gob-1 trehalose phosphatase family.

It catalyses the reaction D-glucose 6-phosphate + UDP-alpha-D-glucose = alpha,alpha-trehalose 6-phosphate + UDP + H(+). Its function is as follows. Catalyzes the production of trehalose from glucose-6-phosphate and UDP-alpha-D-glucose in a 2 step process. The polypeptide is Alpha,alpha-trehalose-phosphate synthase [UDP-forming] 2 (tps-2) (Aphelenchoides avenae (Mycophagous nematode worm)).